Reading from the N-terminus, the 158-residue chain is 6,7-dimethyl-8-ribityllumazine synthase (158 aa).

5-amino-6-(D-ribitylamino)uracil is bound by residues phenylalanine 22, alanine 57 to glutamate 59, and alanine 81 to isoleucine 83. Glycine 86–threonine 87 provides a ligand contact to (2S)-2-hydroxy-3-oxobutyl phosphate. Residue histidine 89 is the Proton donor of the active site. Phenylalanine 114 is a binding site for 5-amino-6-(D-ribitylamino)uracil. Residue arginine 128 participates in (2S)-2-hydroxy-3-oxobutyl phosphate binding.

This sequence belongs to the DMRL synthase family. As to quaternary structure, forms an icosahedral capsid composed of 60 subunits, arranged as a dodecamer of pentamers.

It carries out the reaction (2S)-2-hydroxy-3-oxobutyl phosphate + 5-amino-6-(D-ribitylamino)uracil = 6,7-dimethyl-8-(1-D-ribityl)lumazine + phosphate + 2 H2O + H(+). The protein operates within cofactor biosynthesis; riboflavin biosynthesis; riboflavin from 2-hydroxy-3-oxobutyl phosphate and 5-amino-6-(D-ribitylamino)uracil: step 1/2. Its function is as follows. Catalyzes the formation of 6,7-dimethyl-8-ribityllumazine by condensation of 5-amino-6-(D-ribitylamino)uracil with 3,4-dihydroxy-2-butanone 4-phosphate. This is the penultimate step in the biosynthesis of riboflavin. The protein is 6,7-dimethyl-8-ribityllumazine synthase of Shewanella pealeana (strain ATCC 700345 / ANG-SQ1).